A 320-amino-acid polypeptide reads, in one-letter code: Heterogeneous nuclear ribonucleoprotein A1-like 3 (320 aa).

RRM domains lie at 14–97 (RKLF…DSQR) and 105–184 (KKIF…LSKQ). Disordered stretches follow at residues 182–218 (SKQE…NFGR) and 271–320 (SNFG…GRRF). The segment covering 197-218 (SGSGNFGGGRGGGFGGNDNFGR) has biased composition (gly residues). A compositionally biased stretch (low complexity) spans 308 to 320 (SSSSSSYGSGRRF).

The sequence is that of Heterogeneous nuclear ribonucleoprotein A1-like 3 from Homo sapiens (Human).